Here is a 247-residue protein sequence, read N- to C-terminus: Segregation and condensation protein A (247 aa).

It belongs to the ScpA family. In terms of assembly, component of a cohesin-like complex composed of ScpA, ScpB and the Smc homodimer, in which ScpA and ScpB bind to the head domain of Smc. The presence of the three proteins is required for the association of the complex with DNA.

The protein resides in the cytoplasm. In terms of biological role, participates in chromosomal partition during cell division. May act via the formation of a condensin-like complex containing Smc and ScpB that pull DNA away from mid-cell into both cell halves. The polypeptide is Segregation and condensation protein A (Bacillus cereus (strain ATCC 10987 / NRS 248)).